The chain runs to 85 residues: Small cysteine and glycine repeat-containing protein 5 (85 aa).

The interval 4–69 (CGCGGCGGCG…TCCSCGCGCG (66 aa)) is 10 X 2 AA repeats of CG.

The protein belongs to the KRTAP type 28 family.

Its function is as follows. In the hair cortex, hair keratin intermediate filaments are embedded in an interfilamentous matrix, consisting of hair keratin-associated proteins (KRTAP), which are essential for the formation of a rigid and resistant hair shaft through their extensive disulfide bond cross-linking with abundant cysteine residues of hair keratins. The matrix proteins include the high-sulfur and high-glycine-tyrosine keratins. This chain is Small cysteine and glycine repeat-containing protein 5, found in Homo sapiens (Human).